A 547-amino-acid chain; its full sequence is Chaperonin GroEL (547 aa).

ATP-binding positions include 30-33 (TLGP), lysine 51, 87-91 (DGTTT), glycine 415, 479-481 (NAA), and aspartate 495.

This sequence belongs to the chaperonin (HSP60) family. As to quaternary structure, forms a cylinder of 14 subunits composed of two heptameric rings stacked back-to-back. Interacts with the co-chaperonin GroES.

The protein resides in the cytoplasm. It catalyses the reaction ATP + H2O + a folded polypeptide = ADP + phosphate + an unfolded polypeptide.. Functionally, together with its co-chaperonin GroES, plays an essential role in assisting protein folding. The GroEL-GroES system forms a nano-cage that allows encapsulation of the non-native substrate proteins and provides a physical environment optimized to promote and accelerate protein folding. In Acinetobacter baumannii (strain ACICU), this protein is Chaperonin GroEL.